Reading from the N-terminus, the 243-residue chain is Large ribosomal subunit protein uL2 (243 aa).

The interval 198-243 is disordered; sequence VDHPFGGGGRQHPGKPKSVSRDTPPGRKVGDIASKRTGRGGKGGQE. Residues 221 to 231 are compositionally biased toward basic and acidic residues; that stretch reads PPGRKVGDIAS.

It belongs to the universal ribosomal protein uL2 family. In terms of assembly, part of the 50S ribosomal subunit. Forms a bridge to the 30S subunit in the 70S ribosome.

One of the primary rRNA binding proteins. Required for association of the 30S and 50S subunits to form the 70S ribosome, for tRNA binding and peptide bond formation. It has been suggested to have peptidyltransferase activity; this is somewhat controversial. Makes several contacts with the 16S rRNA in the 70S ribosome. The protein is Large ribosomal subunit protein uL2 of Natronomonas pharaonis (strain ATCC 35678 / DSM 2160 / CIP 103997 / JCM 8858 / NBRC 14720 / NCIMB 2260 / Gabara) (Halobacterium pharaonis).